A 291-amino-acid polypeptide reads, in one-letter code: 4-hydroxy-tetrahydrodipicolinate synthase (291 aa).

T44 lines the pyruvate pocket. Residue Y132 is the Proton donor/acceptor of the active site. The active-site Schiff-base intermediate with substrate is the K161. A pyruvate-binding site is contributed by I202.

Belongs to the DapA family. In terms of assembly, homotetramer; dimer of dimers.

Its subcellular location is the cytoplasm. The catalysed reaction is L-aspartate 4-semialdehyde + pyruvate = (2S,4S)-4-hydroxy-2,3,4,5-tetrahydrodipicolinate + H2O + H(+). It functions in the pathway amino-acid biosynthesis; L-lysine biosynthesis via DAP pathway; (S)-tetrahydrodipicolinate from L-aspartate: step 3/4. Functionally, catalyzes the condensation of (S)-aspartate-beta-semialdehyde [(S)-ASA] and pyruvate to 4-hydroxy-tetrahydrodipicolinate (HTPA). The sequence is that of 4-hydroxy-tetrahydrodipicolinate synthase from Endomicrobium trichonymphae.